Here is a 297-residue protein sequence, read N- to C-terminus: Calponin-1 (297 aa).

Positions H28–A131 constitute a Calponin-homology (CH) domain. 3 Calponin-like repeats span residues I164–Y189, I204–F229, and V243–Y268. The residue at position 170 (T170) is a Phosphothreonine; by ROCK2. Position 175 is a phosphoserine; by ROCK2 (S175). Phosphothreonine; by ROCK2 is present on residues T180 and T184. At T259 the chain carries Phosphothreonine; by ROCK2.

This sequence belongs to the calponin family. As to quaternary structure, part of cGMP kinase signaling complex at least composed of ACTA2/alpha-actin, CNN1/calponin H1, PLN/phospholamban, PRKG1 and ITPR1. As to expression, smooth muscle, and tissues containing significant amounts of smooth muscle.

Its function is as follows. Thin filament-associated protein that is implicated in the regulation and modulation of smooth muscle contraction. It is capable of binding to actin, calmodulin and tropomyosin. The interaction of calponin with actin inhibits the actomyosin Mg-ATPase activity. This chain is Calponin-1 (CNN1), found in Homo sapiens (Human).